Consider the following 338-residue polypeptide: Ferrochelatase (338 aa).

Positions 202 and 283 each coordinate Fe cation.

Belongs to the ferrochelatase family.

Its subcellular location is the cytoplasm. It catalyses the reaction heme b + 2 H(+) = protoporphyrin IX + Fe(2+). The protein operates within porphyrin-containing compound metabolism; protoheme biosynthesis; protoheme from protoporphyrin-IX: step 1/1. In terms of biological role, catalyzes the ferrous insertion into protoporphyrin IX. The chain is Ferrochelatase from Acinetobacter baumannii (strain ATCC 17978 / DSM 105126 / CIP 53.77 / LMG 1025 / NCDC KC755 / 5377).